Here is a 595-residue protein sequence, read N- to C-terminus: MEPEPAAQKQPRPRRRSRRVSMLSEEPAAGLPADTPGPAANERCSLRRGSSFTFLTPGPHWDFTLKRKRREKDDDAVSLSSLDLKEPSNKRVRPLARVTSLANLISPVRNGAVRRFGQTIQSFTLRGDHRSPASAQKSFSRSTVPTPTKRRSSALWSEMLDINMKESLTTREIKRQEAIYELSRGEQDLIEDLKLARKAYHDPMLKLSIMSEEELTHIFGDLDAYIPLHEDLLARIGEATKPDGTVEQIGHILVNWLPGLNAYRGYCSNQLAAKALLDQKKQDPRVQDFLQRCLESPFSRKLDLWSFLDIPRSRLVKYPLLLKEILRHTPKDHRDVQLLEEAILIIQGVLSDINLKKGESECQYYINKLEYLDEKQKDPRIEASKVLLCHGELKNKSGHKLYIFLFQDILVLTRPVTRNERHLYQVYRQPIPVQELVLEDLQDGDVRMGGSFRGAFGNSDKAKNIFRVRFQDPSPGHSHTLQANDVFHKQQWFNCIRAAIAPFQRAASPLELQGLPDLHEECEENNPSAGNLRAQRRSCVVPGVMQIDEESALDCGSSVQTVEDTRNMKAQRPQPGLRRARDKAQSGGKKKETLV.

Methionine 1 bears the N-acetylmethionine mark. The tract at residues 1–42 (MEPEPAAQKQPRPRRRSRRVSMLSEEPAAGLPADTPGPAANE) is disordered. The tract at residues 1 to 74 (MEPEPAAQKQ…LKRKRREKDD (74 aa)) is necessary for nuclear localization. Residues 12–19 (RPRRRSRR) carry the Nuclear localization signal motif. Serine 21 carries the phosphoserine modification. A Nuclear localization signal motif is present at residues 66 to 72 (KRKRREK). A phosphoserine mark is found at serine 100, serine 106, and serine 122. The interval 127 to 151 (GDHRSPASAQKSFSRSTVPTPTKRR) is disordered. The span at 133–146 (ASAQKSFSRSTVPT) shows a compositional bias: polar residues. In terms of domain architecture, DH spans 174-356 (KRQEAIYELS…QGVLSDINLK (183 aa)). One can recognise a PH domain in the interval 386–501 (VLLCHGELKN…WFNCIRAAIA (116 aa)). Serine 508 is modified (phosphoserine). Positions 555–595 (CGSSVQTVEDTRNMKAQRPQPGLRRARDKAQSGGKKKETLV) are disordered.

As to quaternary structure, interacts with RHOA in its GTP- and GDP-bound states, and with CDC42 in its GTP-bound state. Interacts with the PDZ 1 domain of BAIAP1.

The protein localises to the cytoplasm. Its subcellular location is the nucleus. Functionally, acts as a guanine nucleotide exchange factor (GEF) for RhoA GTPase. May be involved in activation of the SAPK/JNK pathway. Stimulates genotoxic stress-induced RHOB activity in breast cancer cells leading to their cell death. This chain is Neuroepithelial cell-transforming gene 1 protein (Net1), found in Mus musculus (Mouse).